The chain runs to 648 residues: EF-hand domain-containing protein 1 (648 aa).

Residues 1 to 45 form a required for its localization in the mitotic spindle and interaction with alpha-tubulin region; sequence MGTNPVHGLPFLPGSSFTDSTKTAFHRSQTLNYRNGYAVVRRPTM. DM10 domains are found at residues 93-198, 239-359, and 416-520; these read DKKV…ESQG, DKQV…KDKF, and DNKV…ESNA. The 36-residue stretch at 582 to 617 folds into the EF-hand domain; it reads SYKENLRETFQMYDKDESGYVDRETFFKICETLNVP.

Microtubule inner protein component of sperm flagellar doublet microtubules. Interacts with the C-terminus of CACNA1E. Interacts with alpha-tubulin. As to expression, expressed in adult brain including hippocampus, cerebellum, cerebral cortex, thalamus, hypothalamus, amygdala and upper brainstem. Expressed in soma and dentrites of pyramidal neurons of the hippocampal CA1 region, pyramidal neurons of the cerebral cortex and Purkinje cells of cerebellum. Highly expressed in testis, trachea, and oviduct, moderately in lung, and slightly in brain. Highly expressed in sperm flagella and tracheal cilia (at protein level).

The protein resides in the cytoplasm. The protein localises to the cytoskeleton. Its subcellular location is the cilium axoneme. It is found in the flagellum axoneme. It localises to the microtubule organizing center. The protein resides in the centrosome. The protein localises to the spindle. Its subcellular location is the spindle pole. Microtubule inner protein (MIP) part of the dynein-decorated doublet microtubules (DMTs) in cilia axoneme, which is required for motile cilia beating. Microtubule-associated protein which regulates cell division and neuronal migration during cortical development. Necessary for radial and tangential cell migration during brain development, possibly acting as a regulator of cell morphology and process formation during migration. May enhance calcium influx through CACNA1E and stimulate programmed cell death. Overexpression of EFHC1 in hippocampal primary culture neurons induced apoptosis. This Mus musculus (Mouse) protein is EF-hand domain-containing protein 1 (Efhc1).